The primary structure comprises 202 residues: Holliday junction branch migration complex subunit RuvA (202 aa).

The segment at 1-64 (MIGRLRGTLA…EDAQLLYGFA (64 aa)) is domain I. The segment at 65 to 143 (GKRERDFFRE…AWETSPAMFA (79 aa)) is domain II. Residues 144 to 154 (LVPNQPDGPAP) form a flexible linker region. A domain III region spans residues 154 to 202 (PVNTAENDAVSALISLGYKPQEASKAISAIKEKGLSSEDMIRRALKGMI).

The protein belongs to the RuvA family. Homotetramer. Forms an RuvA(8)-RuvB(12)-Holliday junction (HJ) complex. HJ DNA is sandwiched between 2 RuvA tetramers; dsDNA enters through RuvA and exits via RuvB. An RuvB hexamer assembles on each DNA strand where it exits the tetramer. Each RuvB hexamer is contacted by two RuvA subunits (via domain III) on 2 adjacent RuvB subunits; this complex drives branch migration. In the full resolvosome a probable DNA-RuvA(4)-RuvB(12)-RuvC(2) complex forms which resolves the HJ.

The protein resides in the cytoplasm. Its function is as follows. The RuvA-RuvB-RuvC complex processes Holliday junction (HJ) DNA during genetic recombination and DNA repair, while the RuvA-RuvB complex plays an important role in the rescue of blocked DNA replication forks via replication fork reversal (RFR). RuvA specifically binds to HJ cruciform DNA, conferring on it an open structure. The RuvB hexamer acts as an ATP-dependent pump, pulling dsDNA into and through the RuvAB complex. HJ branch migration allows RuvC to scan DNA until it finds its consensus sequence, where it cleaves and resolves the cruciform DNA. The polypeptide is Holliday junction branch migration complex subunit RuvA (Pseudomonas fluorescens (strain Pf0-1)).